The sequence spans 340 residues: Cysteinyl leukotriene receptor 1 (340 aa).

The Extracellular segment spans residues 1-31; that stretch reads MDGVRNLTVSCASSNTCNDTIDDFRNQVYST. 2 N-linked (GlcNAc...) asparagine glycosylation sites follow: Asn-6 and Asn-18. The chain crosses the membrane as a helical span at residues 32–52; that stretch reads LYSMITVVGFFGNGFVLYVLI. The Cytoplasmic portion of the chain corresponds to 53–60; sequence KTYHEKSA. A helical transmembrane segment spans residues 61–81; it reads YQVYMINLAVADLLCVCTLPL. The Extracellular segment spans residues 82 to 109; sequence RVVYYVHKGIWLFGDFLCRLSTYALYVN. Cys-99 and Cys-176 are disulfide-bonded. A helical membrane pass occupies residues 110-130; it reads LYCSIFFMTAMSFFRCIAIVF. Topologically, residues 131–144 are cytoplasmic; the sequence is PVQNINLITHKKAK. Residues 145–165 form a helical membrane-spanning segment; that stretch reads IVCIAIWIFVILTSSPFLMST. The Extracellular portion of the chain corresponds to 166 to 196; that stretch reads SYKDEKNNTKCFEPPQXNQAKYHVLVLHYVS. A glycan (N-linked (GlcNAc...) asparagine) is linked at Asn-172. A helical transmembrane segment spans residues 197-217; that stretch reads LFVGFIIPFVIIIVCYTMIIL. Residues 218-233 lie on the Cytoplasmic side of the membrane; sequence TLLKNSMKKNISSRKK. Residues 234–254 traverse the membrane as a helical segment; it reads AIGMIIVVTAAFLISFMPYHI. Residues 255–279 are Extracellular-facing; the sequence is QRTIHLHFLHNDTKHCDSVLRMQKS. Asn-265 carries an N-linked (GlcNAc...) asparagine glycan. Residues 280-300 form a helical membrane-spanning segment; sequence VXITLSLAASNCCFDPLLYFF. Over 301–340 the chain is Cytoplasmic; it reads SGGNFREGLSTFRKHSLSTMTYVPKKKTSLPEKAQEIYKE.

The protein belongs to the G-protein coupled receptor 1 family.

The protein resides in the cell membrane. In terms of biological role, receptor for cysteinyl leukotrienes mediating constriction of the microvascular smooth muscle during an inflammatory response. This response is mediated via a G-protein that activates a phosphatidylinositol-calcium second messenger system. This chain is Cysteinyl leukotriene receptor 1 (CYSLTR1), found in Sus scrofa (Pig).